The sequence spans 89 residues: Small ribosomal subunit protein uS15 (89 aa).

This sequence belongs to the universal ribosomal protein uS15 family. In terms of assembly, part of the 30S ribosomal subunit. Forms a bridge to the 50S subunit in the 70S ribosome, contacting the 23S rRNA.

One of the primary rRNA binding proteins, it binds directly to 16S rRNA where it helps nucleate assembly of the platform of the 30S subunit by binding and bridging several RNA helices of the 16S rRNA. In terms of biological role, forms an intersubunit bridge (bridge B4) with the 23S rRNA of the 50S subunit in the ribosome. This chain is Small ribosomal subunit protein uS15, found in Carboxydothermus hydrogenoformans (strain ATCC BAA-161 / DSM 6008 / Z-2901).